The primary structure comprises 419 residues: Gustatory receptor for sugar taste 64c (419 aa).

The Cytoplasmic portion of the chain corresponds to 1–15 (MQQSGQKGTRNTLQH). Residues 16–36 (AIGPVLVIAQFFGVLPVAGVW) traverse the membrane as a helical segment. Over 37–48 (PSCRPERVRFRW) the chain is Extracellular. The helical transmembrane segment at 49–69 (ISLSLLAALILFVFSIVDCAL) threads the bilayer. Topologically, residues 70–82 (SSKVVFDHGLKIY) are cytoplasmic. A helical transmembrane segment spans residues 83–103 (TIGSLSFSVICIFCFGVFLLL). At 104-139 (SRRWPYIIRRTAECEQIFLEPEYDCSYGRGYSSRLR) the chain is on the extracellular side. Residues 140 to 160 (LWGVCMLVAALCEHSTYVGSA) traverse the membrane as a helical segment. Residues 161-204 (LYNNHLAIVECKLDANFWQNYFQRERQQLFLIMHFTAWWIPFIE) are Cytoplasmic-facing. A helical transmembrane segment spans residues 205-225 (WTTLSMTFVWNFVDIFLILIC). The Extracellular segment spans residues 226–305 (RGMQMRFQQM…FQSKGNYADE (80 aa)). A helical membrane pass occupies residues 306–326 (LYFWFCLSYVIIRVLNMMFAA). At 327–377 (SSIPQEAKEISYTLYEIPTEFWCVELRRLNEIFLSDHFALSGKGYFLLTRR) the chain is on the cytoplasmic side. The chain crosses the membrane as a helical span at residues 378 to 398 (LIFAMAATLMVYELVLINQMA). Residues 399–419 (GSEVQKSFCEGGVGSSKSIFS) lie on the Extracellular side of the membrane.

Belongs to the insect chemoreceptor superfamily. Gustatory receptor (GR) family. Gr5a subfamily. In terms of tissue distribution, expressed in Gr5a-expressing sugar-sensing cells.

Its subcellular location is the cell membrane. In terms of biological role, one of the few identified sugar gustatory receptors identified so far and which promotes the starvation-induced increase of feeding motivation. The polypeptide is Gustatory receptor for sugar taste 64c (Gr64c) (Drosophila melanogaster (Fruit fly)).